A 144-amino-acid polypeptide reads, in one-letter code: INO80 complex subunit 5 (144 aa).

The interval M1 to I58 is disordered. Positions S35–I58 are enriched in polar residues.

Component of the INO80 chromatin remodeling complex.

The protein resides in the nucleus. In terms of biological role, component of the INO80 complex which remodels chromatin by shifting nucleosomes and is involved in DNA repair. This Schizosaccharomyces pombe (strain 972 / ATCC 24843) (Fission yeast) protein is INO80 complex subunit 5 (iec5).